The primary structure comprises 2410 residues: Genome polyprotein 1 (2410 aa).

A disordered region spans residues 1 to 21; the sequence is MEQTLAQAVSRRNKTDTPMAE. Residues 474-632 enclose the Helicase ATP-binding domain; that stretch reads AMADANNCWS…AARKYPLHVE (159 aa). Residue 487–494 participates in ATP binding; sequence GHTGSGKS. Positions 583-586 match the DEAH box motif; the sequence is DEAH. One can recognise a Helicase C-terminal domain in the interval 647 to 813; the sequence is GGGDLLDISK…NVPFYMNETF (167 aa). Tyrosine 1234 is modified (O-(5'-phospho-RNA)-tyrosine). One can recognise a Peptidase C4 domain in the interval 1359 to 1573; it reads ITLEASTGIL…CGYASHTALF (215 aa). Catalysis depends on for nuclear inclusion protein A activity residues histidine 1404, aspartate 1440, and cysteine 1507. Residues 1857 to 1980 enclose the RdRp catalytic domain; the sequence is WLHGSGDGSR…AISPQFDEEF (124 aa). The disordered stretch occupies residues 2175 to 2200; the sequence is MPTEDDGKLKTPSGARIPSSAADGNW.

It belongs to the bymoviruses polyprotein 1 family. Post-translationally, VPg is uridylylated by the polymerase and is covalently attached to the 5'-end of the genomic RNA. This uridylylated form acts as a nucleotide-peptide primer for the polymerase. In terms of processing, the viral RNA1 of bymoviruses is expressed as a single polyprotein which undergoes post-translational proteolytic processing by the main proteinase NIa-pro resulting in the production of at least eight individual proteins.

It localises to the host cytoplasmic vesicle. The protein localises to the virion. The enzyme catalyses RNA(n) + a ribonucleoside 5'-triphosphate = RNA(n+1) + diphosphate. It catalyses the reaction Hydrolyzes glutaminyl bonds, and activity is further restricted by preferences for the amino acids in P6 - P1' that vary with the species of potyvirus, e.g. Glu-Xaa-Xaa-Tyr-Xaa-Gln-|-(Ser or Gly) for the enzyme from tobacco etch virus. The natural substrate is the viral polyprotein, but other proteins and oligopeptides containing the appropriate consensus sequence are also cleaved.. Functionally, indispensable for virus replication. In terms of biological role, mediates the cap-independent, EIF4E-dependent translation of viral genomic RNAs. Binds to the cap-binding site of host EIF4E and thus interferes with the host EIF4E-dependent mRNA export and translation. VPg-RNA directly binds EIF4E and is a template for transcription. Also forms trimeric complexes with EIF4E-EIF4G, which are templates for translation. Its function is as follows. Has RNA-binding and proteolytic activities. An RNA-dependent RNA polymerase that plays an essential role in the virus replication. The polypeptide is Genome polyprotein 1 (Hordeum vulgare (Barley)).